The sequence spans 92 residues: Small ribosomal subunit protein uS19c (92 aa).

The protein belongs to the universal ribosomal protein uS19 family.

The protein localises to the plastid. It localises to the chloroplast. Its function is as follows. Protein S19 forms a complex with S13 that binds strongly to the 16S ribosomal RNA. This Pyropia yezoensis (Susabi-nori) protein is Small ribosomal subunit protein uS19c.